Here is a 624-residue protein sequence, read N- to C-terminus: DNA (cytosine-5)-methyltransferase DRM1 (624 aa).

2 consecutive UBA domains span residues 57–100 (RISD…LFNY) and 108–149 (SSKS…LLTY). The tract at residues 160-189 (DMNININDDDDDNLYSLSSDDEEDELNNSS) is disordered. Residues 166–185 (NDDDDDNLYSLSSDDEEDEL) show a composition bias toward acidic residues. One can recognise a UBA 3 domain in the interval 188–231 (SSNEDRILQALIKMGYLREDAAIAIERCGEDASMEEVVDFICAA). The 332-residue stretch at 291–622 (MHRPVPIPDI…EAVRRKARHM (332 aa)) folds into the SAM-dependent MTase DRM-type domain.

It belongs to the class I-like SAM-binding methyltransferase superfamily. DRM-methyltransferase family.

It localises to the nucleus. The enzyme catalyses a 2'-deoxycytidine in DNA + S-adenosyl-L-methionine = a 5-methyl-2'-deoxycytidine in DNA + S-adenosyl-L-homocysteine + H(+). Involved in de novo DNA methylation. Controls asymmetric and CpNpG methylation. Required for FWA gene silencing but not for the maintenance of SUP gene silencing. Functionally redundant to CMT3 to maintain non-CpG methylation. Involved in RNA-directed DNA methylation. This Arabidopsis thaliana (Mouse-ear cress) protein is DNA (cytosine-5)-methyltransferase DRM1 (DRM1).